Reading from the N-terminus, the 349-residue chain is MTFLRIATKRAIYLHRPANPALPTSSILPVLHSTNVATRVPSPCAIRHSSHSPLGAAQANPRKKVTMQTLRNLYKKGEPITMLTAHDFPSAHVADAAGMDMILVGDSLAMVALGMQDTSEVTLDDMLVHCRSVARAAQSAFTVSDLPMGSYEVSPEQALQSAIRIVKEGRVQGVKLEGGEEMAPAIKRITTAGIPVVGHIGLTPQRQNALGGFRVQGKSTTDALKLLKDALAVQEAGAFMIVIEAVPPEIASIVTQKLSVPTIGIGAGNGCSGQVLVQIDMTGNFPPGRFLPKFVKQYANVWNEALQGIQQYREEVKSRAYPAEQHTYPIPKEELVEFQKAVDELPEEK.

The protein belongs to the PanB family.

It catalyses the reaction 3-methyl-2-oxobutanoate + (6R)-5,10-methylene-5,6,7,8-tetrahydrofolate + H2O = 2-dehydropantoate + (6S)-5,6,7,8-tetrahydrofolate. The protein operates within cofactor biosynthesis; (R)-pantothenate biosynthesis; (R)-pantoate from 3-methyl-2-oxobutanoate: step 1/2. The chain is 3-methyl-2-oxobutanoate hydroxymethyltransferase (panB) from Emericella nidulans (strain FGSC A4 / ATCC 38163 / CBS 112.46 / NRRL 194 / M139) (Aspergillus nidulans).